Reading from the N-terminus, the 467-residue chain is ATP synthase subunit beta (467 aa).

150–157 is an ATP binding site; sequence GGAGVGKT.

Belongs to the ATPase alpha/beta chains family. As to quaternary structure, F-type ATPases have 2 components, CF(1) - the catalytic core - and CF(0) - the membrane proton channel. CF(1) has five subunits: alpha(3), beta(3), gamma(1), delta(1), epsilon(1). CF(0) has three main subunits: a(1), b(2) and c(9-12). The alpha and beta chains form an alternating ring which encloses part of the gamma chain. CF(1) is attached to CF(0) by a central stalk formed by the gamma and epsilon chains, while a peripheral stalk is formed by the delta and b chains.

It localises to the cell inner membrane. The enzyme catalyses ATP + H2O + 4 H(+)(in) = ADP + phosphate + 5 H(+)(out). Functionally, produces ATP from ADP in the presence of a proton gradient across the membrane. The catalytic sites are hosted primarily by the beta subunits. The protein is ATP synthase subunit beta of Polaromonas sp. (strain JS666 / ATCC BAA-500).